Consider the following 469-residue polypeptide: Probable monogalactosyldiacylglycerol synthase 2, chloroplastic (469 aa).

The transit peptide at 1–42 (MVISVATPRRSIRDAVLGGVLGAGGRQLYQPLRCAFYDGAAG) directs the protein to the chloroplast.

The protein belongs to the glycosyltransferase 28 family.

The protein resides in the plastid. The protein localises to the chloroplast membrane. It carries out the reaction a 1,2-diacyl-sn-glycerol + UDP-alpha-D-galactose = a 1,2-diacyl-3-O-(beta-D-galactosyl)-sn-glycerol + UDP + H(+). Functionally, involved in the synthesis of the major structural component of photosynthetic membranes. This chain is Probable monogalactosyldiacylglycerol synthase 2, chloroplastic (MGD2), found in Oryza sativa subsp. japonica (Rice).